A 272-amino-acid polypeptide reads, in one-letter code: Dermonecrotic toxin LvSicTox-alphaIC1biii (272 aa).

The active site involves His5. Residues Glu25 and Asp27 each coordinate Mg(2+). His41 functions as the Nucleophile in the catalytic mechanism. 2 disulfide bridges follow: Cys45–Cys51 and Cys47–Cys189. Asp84 lines the Mg(2+) pocket.

It belongs to the arthropod phospholipase D family. Class II subfamily. It depends on Mg(2+) as a cofactor. Expressed by the venom gland.

Its subcellular location is the secreted. The catalysed reaction is an N-(acyl)-sphingosylphosphocholine = an N-(acyl)-sphingosyl-1,3-cyclic phosphate + choline. It carries out the reaction an N-(acyl)-sphingosylphosphoethanolamine = an N-(acyl)-sphingosyl-1,3-cyclic phosphate + ethanolamine. The enzyme catalyses a 1-acyl-sn-glycero-3-phosphocholine = a 1-acyl-sn-glycero-2,3-cyclic phosphate + choline. It catalyses the reaction a 1-acyl-sn-glycero-3-phosphoethanolamine = a 1-acyl-sn-glycero-2,3-cyclic phosphate + ethanolamine. Dermonecrotic toxins cleave the phosphodiester linkage between the phosphate and headgroup of certain phospholipids (sphingolipid and lysolipid substrates), forming an alcohol (often choline) and a cyclic phosphate. This toxin acts on sphingomyelin (SM). It may also act on ceramide phosphoethanolamine (CPE), lysophosphatidylcholine (LPC) and lysophosphatidylethanolamine (LPE), but not on lysophosphatidylserine (LPS), and lysophosphatidylglycerol (LPG). It acts by transphosphatidylation, releasing exclusively cyclic phosphate products as second products. Induces dermonecrosis, hemolysis, increased vascular permeability, edema, inflammatory response, and platelet aggregation. The sequence is that of Dermonecrotic toxin LvSicTox-alphaIC1biii from Loxosceles variegata (Recluse spider).